The sequence spans 464 residues: JmjC domain-containing protein 1 (464 aa).

The region spanning 182–349 (LYAKDMHLFR…QMYTALKEQY (168 aa)) is the JmjC domain.

The sequence is that of JmjC domain-containing protein 1 (jmj1) from Schizosaccharomyces pombe (strain 972 / ATCC 24843) (Fission yeast).